The following is a 431-amino-acid chain: L-ornithine N(5)-monooxygenase (431 aa).

Residues 40 to 48 (EKLPTFSWH) and glutamine 59 each bind FAD. Residue lysine 64 coordinates substrate. NADP(+) contacts are provided by residues 202-205 (CGQS) and arginine 228. Residues 242–245 (NSLY) and asparagine 273 contribute to the substrate site. 273–275 (NYS) is a binding site for NADP(+). An FAD-binding site is contributed by 399-401 (TLL). Residue serine 402 coordinates substrate.

It belongs to the lysine N(6)-hydroxylase/L-ornithine N(5)-oxygenase family. It depends on FAD as a cofactor.

The protein resides in the cytoplasm. Its subcellular location is the nucleus. It catalyses the reaction L-ornithine + NADPH + O2 = N(5)-hydroxy-L-ornithine + NADP(+) + H2O. The catalysed reaction is L-ornithine + NADH + O2 = N(5)-hydroxy-L-ornithine + NAD(+) + H2O. It participates in siderophore biosynthesis; ferrichrome biosynthesis. Its function is as follows. Catalyzes the conversion of L-ornithine to N(5)-hydroxyornithine, the first step in the biosynthesis of all hydroxamate-containing siderophores, such as ferrichrome. The chain is L-ornithine N(5)-monooxygenase from Schizosaccharomyces pombe (strain 972 / ATCC 24843) (Fission yeast).